The sequence spans 238 residues: Orotidine 5'-phosphate decarboxylase (238 aa).

Residues Asp18, Lys40, 67-76, Thr122, Arg183, Gln192, and Arg213 each bind substrate; that span reads DMKLLDIDNT. The Proton donor role is filled by Lys69.

This sequence belongs to the OMP decarboxylase family. Type 1 subfamily. Homodimer.

It catalyses the reaction orotidine 5'-phosphate + H(+) = UMP + CO2. It participates in pyrimidine metabolism; UMP biosynthesis via de novo pathway; UMP from orotate: step 2/2. Catalyzes the decarboxylation of orotidine 5'-monophosphate (OMP) to uridine 5'-monophosphate (UMP). This chain is Orotidine 5'-phosphate decarboxylase, found in Brucella melitensis biotype 2 (strain ATCC 23457).